Reading from the N-terminus, the 397-residue chain is CCA-adding enzyme (397 aa).

Positions 26 and 29 each coordinate ATP. The CTP site is built by Gly26 and Arg29. Residues Asp39 and Asp41 each coordinate Mg(2+). Residues Arg110, Asp153, Arg156, Arg159, and Arg162 each coordinate ATP. Residues Arg110, Asp153, Arg156, Arg159, and Arg162 each contribute to the CTP site.

The protein belongs to the tRNA nucleotidyltransferase/poly(A) polymerase family. Bacterial CCA-adding enzyme type 3 subfamily. As to quaternary structure, homodimer. Mg(2+) is required as a cofactor.

It carries out the reaction a tRNA precursor + 2 CTP + ATP = a tRNA with a 3' CCA end + 3 diphosphate. The enzyme catalyses a tRNA with a 3' CCA end + 2 CTP + ATP = a tRNA with a 3' CCACCA end + 3 diphosphate. In terms of biological role, catalyzes the addition and repair of the essential 3'-terminal CCA sequence in tRNAs without using a nucleic acid template. Adds these three nucleotides in the order of C, C, and A to the tRNA nucleotide-73, using CTP and ATP as substrates and producing inorganic pyrophosphate. tRNA 3'-terminal CCA addition is required both for tRNA processing and repair. Also involved in tRNA surveillance by mediating tandem CCA addition to generate a CCACCA at the 3' terminus of unstable tRNAs. While stable tRNAs receive only 3'-terminal CCA, unstable tRNAs are marked with CCACCA and rapidly degraded. The sequence is that of CCA-adding enzyme from Bacillus thuringiensis subsp. konkukian (strain 97-27).